Here is a 78-residue protein sequence, read N- to C-terminus: uncharacterized protein (78 aa).

This protein may be involved in virus assembly. Essential for virus function. This is an uncharacterized protein from Sulfolobus spindle-shape virus 1 (SSV1).